The chain runs to 233 residues: Large ribosomal subunit protein uL1 (233 aa).

The protein belongs to the universal ribosomal protein uL1 family. As to quaternary structure, part of the 50S ribosomal subunit.

Its function is as follows. Binds directly to 23S rRNA. The L1 stalk is quite mobile in the ribosome, and is involved in E site tRNA release. Protein L1 is also a translational repressor protein, it controls the translation of the L11 operon by binding to its mRNA. The chain is Large ribosomal subunit protein uL1 from Aeromonas hydrophila subsp. hydrophila (strain ATCC 7966 / DSM 30187 / BCRC 13018 / CCUG 14551 / JCM 1027 / KCTC 2358 / NCIMB 9240 / NCTC 8049).